The sequence spans 209 residues: DNA transformation protein TfoX1 (209 aa).

This sequence belongs to the Sxy/TfoX family.

Required for DNA transformation jointly with TfoY (tfoX2). This is DNA transformation protein TfoX1 from Aliivibrio fischeri (strain ATCC 700601 / ES114) (Vibrio fischeri).